Reading from the N-terminus, the 287-residue chain is ATP synthase gamma chain (287 aa).

The protein belongs to the ATPase gamma chain family. As to quaternary structure, F-type ATPases have 2 components, CF(1) - the catalytic core - and CF(0) - the membrane proton channel. CF(1) has five subunits: alpha(3), beta(3), gamma(1), delta(1), epsilon(1). CF(0) has three main subunits: a, b and c.

Its subcellular location is the cell inner membrane. Its function is as follows. Produces ATP from ADP in the presence of a proton gradient across the membrane. The gamma chain is believed to be important in regulating ATPase activity and the flow of protons through the CF(0) complex. This Geobacter sp. (strain M21) protein is ATP synthase gamma chain.